The sequence spans 458 residues: Probable M18 family aminopeptidase 1 (458 aa).

His95, His170, and His434 together coordinate Zn(2+).

Belongs to the peptidase M18 family. Zn(2+) is required as a cofactor.

This Borreliella burgdorferi (strain ATCC 35210 / DSM 4680 / CIP 102532 / B31) (Borrelia burgdorferi) protein is Probable M18 family aminopeptidase 1 (apeA).